The sequence spans 355 residues: Beta-ketoacyl-[acyl-carrier-protein] synthase III 1 (355 aa).

Active-site residues include Cys122 and His280. Residues 281-285 (QANER) form an ACP-binding region. Asn311 is a catalytic residue.

Belongs to the thiolase-like superfamily. FabH family. In terms of assembly, homodimer.

It localises to the cytoplasm. It catalyses the reaction malonyl-[ACP] + acetyl-CoA + H(+) = 3-oxobutanoyl-[ACP] + CO2 + CoA. It functions in the pathway lipid metabolism; fatty acid biosynthesis. Functionally, catalyzes the condensation reaction of fatty acid synthesis by the addition to an acyl acceptor of two carbons from malonyl-ACP. Catalyzes the first condensation reaction which initiates fatty acid synthesis and may therefore play a role in governing the total rate of fatty acid production. Possesses both acetoacetyl-ACP synthase and acetyl transacylase activities. Its substrate specificity determines the biosynthesis of branched-chain and/or straight-chain of fatty acids. The sequence is that of Beta-ketoacyl-[acyl-carrier-protein] synthase III 1 from Streptomyces avermitilis (strain ATCC 31267 / DSM 46492 / JCM 5070 / NBRC 14893 / NCIMB 12804 / NRRL 8165 / MA-4680).